Consider the following 431-residue polypeptide: MEQFSTSSSESSDSSSEYSLEFYMDTSWVLDAANLVFFMQAGFGMLEAGMVRAKNTKSILLKNLINTAICAISYYCVGHSFAYGKVNPNSFVGFGNFFLMDYTHYAYWMIQWAYAATATTIATGAMAERLQLHCYILFTLVQTILIYPFVAHWIWSQNGWLFDLGIVDFAGGAVIHIVAGITGACGSFLLGPRIGRFNQESGKPKNLPGHSVVLMSLGAMILWYSWYGYTAGASLGMTRSRVLPASRVSVVVTLSGATGLITVLGIGKIFNGHYDLVKGINGLIAGLVSSTSSCAYIEPWAAIIIGFIGGIVYWFSSWALLNWLRLDDPVDSTAIHLFGGCWSLISVAFFATHGRVRNPDIILPGGIFYGGGISLLWVQLVGMVLAILWAGFLSGIFFFTMDYFGKLRVDVDTELAGLDNSNHGGSAYIFD.

Residues 1–27 are Extracellular-facing; it reads MEQFSTSSSESSDSSSEYSLEFYMDTS. Residues 28–48 traverse the membrane as a helical segment; the sequence is WVLDAANLVFFMQAGFGMLEA. Residues 49–63 lie on the Cytoplasmic side of the membrane; that stretch reads GMVRAKNTKSILLKN. A helical membrane pass occupies residues 64 to 84; it reads LINTAICAISYYCVGHSFAYG. Residues 85–102 are Extracellular-facing; that stretch reads KVNPNSFVGFGNFFLMDY. A helical transmembrane segment spans residues 103–125; the sequence is THYAYWMIQWAYAATATTIATGA. At 126–134 the chain is on the cytoplasmic side; that stretch reads MAERLQLHC. Residues 135–155 traverse the membrane as a helical segment; that stretch reads YILFTLVQTILIYPFVAHWIW. Over 156–160 the chain is Extracellular; that stretch reads SQNGW. The chain crosses the membrane as a helical span at residues 161–181; the sequence is LFDLGIVDFAGGAVIHIVAGI. Residues 182–211 are Cytoplasmic-facing; the sequence is TGACGSFLLGPRIGRFNQESGKPKNLPGHS. A helical membrane pass occupies residues 212–232; it reads VVLMSLGAMILWYSWYGYTAG. Residues 233 to 249 are Extracellular-facing; the sequence is ASLGMTRSRVLPASRVS. A helical membrane pass occupies residues 250–270; that stretch reads VVVTLSGATGLITVLGIGKIF. Topologically, residues 271-300 are cytoplasmic; that stretch reads NGHYDLVKGINGLIAGLVSSTSSCAYIEPW. The chain crosses the membrane as a helical span at residues 301-321; it reads AAIIIGFIGGIVYWFSSWALL. The Extracellular portion of the chain corresponds to 322–333; it reads NWLRLDDPVDST. Residues 334–354 traverse the membrane as a helical segment; the sequence is AIHLFGGCWSLISVAFFATHG. Residues 355-357 are Cytoplasmic-facing; the sequence is RVR. Residues 358 to 378 traverse the membrane as a helical segment; the sequence is NPDIILPGGIFYGGGISLLWV. A topological domain (extracellular) is located at residue Gln379. A helical membrane pass occupies residues 380-400; it reads LVGMVLAILWAGFLSGIFFFT. The Cytoplasmic portion of the chain corresponds to 401 to 431; it reads MDYFGKLRVDVDTELAGLDNSNHGGSAYIFD.

Belongs to the ammonia transporter channel (TC 1.A.11.2) family.

Its subcellular location is the cell membrane. It is found in the endosome membrane. The protein resides in the cytoplasmic vesicle. It localises to the phagosome membrane. Its function is as follows. Ammonium transporter that mediates the import of ammonium in prespore cells. Controls ammonium homeostasis during growth and development. Ammonium has been shown to function as a morphogen at multiple steps during the development. May function as an ammonia sensor that relays information concerning ammonia concentrations to the signaling pathway involved in the slug versus culmination choice and regulates prestalk gene expression. This chain is Ammonium transporter 3 (amtC), found in Dictyostelium discoideum (Social amoeba).